We begin with the raw amino-acid sequence, 62 residues long: Rubredoxin-2 (62 aa).

The Rubredoxin-like domain occupies 7–58; it reads MWRCQMVNCGYVYDPDRGDKRRKVPAGTKFEDLPEDWRCPVCGAGKKSFRRL. Fe cation contacts are provided by C10, C15, C45, and C48.

It belongs to the rubredoxin family. As to quaternary structure, monomer. It depends on Fe(3+) as a cofactor.

Rubredoxin is a small nonheme, iron protein lacking acid-labile sulfide. Its single Fe, chelated to 4 Cys, functions as an electron acceptor and may also stabilize the conformation of the molecule. The protein is Rubredoxin-2 (rd2) of Desulfovibrio desulfuricans (strain ATCC 27774 / DSM 6949 / MB).